The sequence spans 2036 residues: Proline-rich protein 12 (2036 aa).

Disordered regions lie at residues 210 to 283 (GGGV…RALP), 331 to 587 (CSPL…GAPG), and 649 to 697 (APSP…DPQR). The segment covering 223 to 240 (QTPPYRPGPPDPPPPPRH) has biased composition (pro residues). Over residues 249 to 258 (ASSSAAAAAA) the composition is skewed to low complexity. Phosphoserine occurs at positions 332 and 340. Residues 340–365 (SPGAGEPSKAGPSGATAGASGRATGP) are compositionally biased toward low complexity. 2 stretches are compositionally biased toward gly residues: residues 367–380 (AAGGGGAGGGGGGY) and 391–400 (TGKGGYGAAA). Composition is skewed to low complexity over residues 411–432 (STATPKCQSLGGPAAAYATGKA) and 441–458 (QAYSPGQPQGLLGPQAYG). A compositionally biased stretch (pro residues) spans 479-490 (PPQPPSGPPPPG). Composition is skewed to polar residues over residues 493–504 (TCQSYSPDQLQG) and 523–537 (GLPTASPSLSYSTGH). Over residues 543 to 558 (GHGGGWGPSSLGGGGE) the composition is skewed to gly residues. Phosphoserine is present on Ser651. The span at 673 to 683 (GLGGSGGAGGP) shows a compositional bias: gly residues. Thr738 is subject to Phosphothreonine. Disordered regions lie at residues 758-850 (AFLQ…PLQL), 859-878 (LEPAAPSPRLRPEESLDPPG), 886-925 (ALEPLPPAPGDTGVGPPNSEGKDPAGAYRSPSPQGTKAPR), and 952-1068 (EMFG…CSTK). The span at 802–817 (LPSVLSHAPSPSPSAS) shows a compositional bias: low complexity. Residues 833-847 (PQPPPPPPPPPPPMP) show a composition bias toward pro residues. Ser865 bears the Phosphoserine mark. The segment covering 1037–1052 (AAPPPPPPPPPPPAPA) has biased composition (pro residues). Residues Ser1077 and Ser1135 each carry the phosphoserine modification. Disordered stretches follow at residues 1120 to 1260 (RLPD…SLTR), 1294 to 1347 (RHPP…GGAL), 1376 to 1573 (TLPS…GEGI), and 1668 to 1840 (HRPP…PGRL). The span at 1182-1194 (PTTAGPASASTPT) shows a compositional bias: low complexity. Over residues 1199–1208 (KPRGRGRGRG) the composition is skewed to basic residues. Over residues 1209–1223 (RKAEEAGGTRLEPLK) the composition is skewed to basic and acidic residues. Position 1223 is an N6-acetyllysine (Lys1223). Positions 1239-1257 (GTSSGDAISGTDHNSLDSS) are enriched in polar residues. Position 1304 is a phosphothreonine (Thr1304). Pro residues-rich tracts occupy residues 1306–1317 (PLSPPKSVPPSV) and 1324–1338 (PQPPATPAVPHPPPS). Ser1308 bears the Phosphoserine mark. 3 positions are modified to phosphoserine: Ser1381, Ser1382, and Ser1387. Pro residues-rich tracts occupy residues 1420-1438 (DGPPLAPAAAVPGPPPLPG) and 1458-1535 (PPTP…APSP). A compositionally biased stretch (basic and acidic residues) spans 1541–1553 (PDTRPLHLAKKQE). The residue at position 1561 (Thr1561) is a Phosphothreonine. Position 1568 is a phosphoserine (Ser1568). Over residues 1691–1703 (APPPKAPAPPPKP) the composition is skewed to pro residues. Basic and acidic residues-rich tracts occupy residues 1704-1715 (ETPEKTTSEKPP) and 1737-1769 (PVEKEKEKEKVTRGERPLRGERATSGRQTRPER). Residue Thr1705 is modified to Phosphothreonine. The segment covering 1817-1829 (GSSSDSESSPGAP) has biased composition (low complexity). Ser1925 carries the post-translational modification Phosphoserine.

The protein localises to the nucleus. It is found in the postsynaptic density. Its subcellular location is the synapse. The protein resides in the synaptosome. The polypeptide is Proline-rich protein 12 (Homo sapiens (Human)).